A 149-amino-acid chain; its full sequence is MHCPFCSATDTKVIDSRLVSDGHQVRRRRQCLACSERFTTFESAELVMPKVIKSNGNREPFDEDKLSGGLYRSLEKRPVSADLVELALNTIKSKLRATGEREVPSEMIGNFVMDQLKELDKVAYIRFASVYRSFEDIKEFGEEIAKLEK.

A zinc finger spans residues 3–34; sequence CPFCSATDTKVIDSRLVSDGHQVRRRRQCLAC. Residues 49-139 enclose the ATP-cone domain; the sequence is PKVIKSNGNR…VYRSFEDIKE (91 aa).

The protein belongs to the NrdR family. It depends on Zn(2+) as a cofactor.

Its function is as follows. Negatively regulates transcription of bacterial ribonucleotide reductase nrd genes and operons by binding to NrdR-boxes. In Aliivibrio salmonicida (strain LFI1238) (Vibrio salmonicida (strain LFI1238)), this protein is Transcriptional repressor NrdR.